Consider the following 1102-residue polypeptide: Carbamoyl phosphate synthase large chain (1102 aa).

The carboxyphosphate synthetic domain stretch occupies residues 1 to 408 (MPKRTDIQSV…ALQKALRSLE (408 aa)). ATP is bound by residues Arg-129, Arg-175, Gly-181, Gly-182, Glu-214, Ile-216, Glu-221, Gly-247, Val-248, His-249, Gln-291, and Glu-305. In terms of domain architecture, ATP-grasp 1 spans 138–334 (AVRAKIGHGE…IAKIAAKLAV (197 aa)). Mg(2+) is bound by residues Gln-291, Glu-305, and Asn-307. Mn(2+) is bound by residues Gln-291, Glu-305, and Asn-307. The interval 409-551 (KKGSQFTFVG…YFYSSYDEES (143 aa)) is oligomerization domain. The carbamoyl phosphate synthetic domain stretch occupies residues 552-954 (EVAPREKPAV…AYAKSQAGAY (403 aa)). Residues 682–873 (GQVLAEAGLP…LAKAAARISL (192 aa)) form the ATP-grasp 2 domain. The ATP site is built by Arg-718, Arg-757, Leu-759, Glu-764, Gly-789, Ile-790, His-791, Ser-792, Gln-832, and Glu-844. The Mg(2+) site is built by Gln-832, Glu-844, and Asn-846. Residues Gln-832, Glu-844, and Asn-846 each coordinate Mn(2+). One can recognise an MGS-like domain in the interval 955-1100 (GPLPTKGRAF…QEHAEHLTAA (146 aa)). An allosteric domain region spans residues 955-1102 (GPLPTKGRAF…HAEHLTAARD (148 aa)).

This sequence belongs to the CarB family. Composed of two chains; the small (or glutamine) chain promotes the hydrolysis of glutamine to ammonia, which is used by the large (or ammonia) chain to synthesize carbamoyl phosphate. Tetramer of heterodimers (alpha,beta)4. The cofactor is Mg(2+). Requires Mn(2+) as cofactor.

It catalyses the reaction hydrogencarbonate + L-glutamine + 2 ATP + H2O = carbamoyl phosphate + L-glutamate + 2 ADP + phosphate + 2 H(+). The enzyme catalyses hydrogencarbonate + NH4(+) + 2 ATP = carbamoyl phosphate + 2 ADP + phosphate + 2 H(+). Its pathway is amino-acid biosynthesis; L-arginine biosynthesis; carbamoyl phosphate from bicarbonate: step 1/1. It participates in pyrimidine metabolism; UMP biosynthesis via de novo pathway; (S)-dihydroorotate from bicarbonate: step 1/3. Large subunit of the glutamine-dependent carbamoyl phosphate synthetase (CPSase). CPSase catalyzes the formation of carbamoyl phosphate from the ammonia moiety of glutamine, carbonate, and phosphate donated by ATP, constituting the first step of 2 biosynthetic pathways, one leading to arginine and/or urea and the other to pyrimidine nucleotides. The large subunit (synthetase) binds the substrates ammonia (free or transferred from glutamine from the small subunit), hydrogencarbonate and ATP and carries out an ATP-coupled ligase reaction, activating hydrogencarbonate by forming carboxy phosphate which reacts with ammonia to form carbamoyl phosphate. In Streptomyces avermitilis (strain ATCC 31267 / DSM 46492 / JCM 5070 / NBRC 14893 / NCIMB 12804 / NRRL 8165 / MA-4680), this protein is Carbamoyl phosphate synthase large chain.